The chain runs to 287 residues: Probable phosphite transport system-binding protein PtxB (287 aa).

The N-terminal stretch at 1 to 23 is a signal peptide; sequence MKRLSALLLTCLLSAVSSLSALA.

The protein belongs to the phosphate/phosphite/phosphonate binding protein family.

Probably forms part of a binding-protein-dependent phosphite transporter. Required for oxidation of phosphite to phosphate. The protein is Probable phosphite transport system-binding protein PtxB (ptxB) of Stutzerimonas stutzeri (Pseudomonas stutzeri).